The following is a 789-amino-acid chain: Bifunctional purine biosynthetic protein PUR2,5 (789 aa).

Positions 1 to 428 (MEKINVLVVG…NRTDIAHRAF (428 aa)) are GARS. The ATP-grasp domain occupies 114 to 321 (KDFMKKHNIP…LLELMLATVE (208 aa)). ATP is bound at residue 140–201 (IANSSHNLVI…EEFLEGDELS (62 aa)). E291 and N293 together coordinate Mg(2+). An AIRS region spans residues 438–773 (LTYEDAGVSV…TVYTIGKLVE (336 aa)).

In the N-terminal section; belongs to the GARS family. The protein in the C-terminal section; belongs to the AIR synthase family. The cofactor is Mg(2+). Mn(2+) serves as cofactor.

It localises to the cytoplasm. The protein localises to the cytosol. It carries out the reaction 2-formamido-N(1)-(5-O-phospho-beta-D-ribosyl)acetamidine + ATP = 5-amino-1-(5-phospho-beta-D-ribosyl)imidazole + ADP + phosphate + H(+). It catalyses the reaction 5-phospho-beta-D-ribosylamine + glycine + ATP = N(1)-(5-phospho-beta-D-ribosyl)glycinamide + ADP + phosphate + H(+). The protein operates within purine metabolism; IMP biosynthesis via de novo pathway; 5-amino-1-(5-phospho-D-ribosyl)imidazole from N(2)-formyl-N(1)-(5-phospho-D-ribosyl)glycinamide: step 2/2. It functions in the pathway purine metabolism; IMP biosynthesis via de novo pathway; N(1)-(5-phospho-D-ribosyl)glycinamide from 5-phospho-alpha-D-ribose 1-diphosphate: step 2/2. Its function is as follows. Catalyzes the second and fifth step in the 'de novo' purine biosynthesis pathway; contains phosphoribosylamine--glycine ligase (GARS) and phosphoribosylformylglycinamidine cyclo-ligase (AIRS) activities. This is Bifunctional purine biosynthetic protein PUR2,5 from Pichia angusta (Yeast).